The chain runs to 291 residues: MTFQDLILSLQGYWAKQGCVIQQPYDCEKGAGTFNPATFLRVLGPEPWNVAYVEPSRRPTDGRYGENPNRLQHYYQFQVIMKPSPMNILDLYLDSLRSFGINPNQHDIRFVEDDWESPTLGAWGLGWEVWLDGMEITQFTYFQQAGGIDLKPVSSEITYGCERIAMYLQGVDNVYDLEWVKGVRYGDIHHESEVEFSTYNFEEADVEMLLQLFGMYEKECVRLVEKGLVLPAYDYVMKCSHTFNLLDARGAISVTERASYIGKVRNVAKLCAEGYLQMRERLGFPLLKGGR.

Belongs to the class-II aminoacyl-tRNA synthetase family. Tetramer of two alpha and two beta subunits.

Its subcellular location is the cytoplasm. It carries out the reaction tRNA(Gly) + glycine + ATP = glycyl-tRNA(Gly) + AMP + diphosphate. This chain is Glycine--tRNA ligase alpha subunit, found in Geotalea uraniireducens (strain Rf4) (Geobacter uraniireducens).